A 423-amino-acid chain; its full sequence is Glutamate-1-semialdehyde 2,1-aminomutase (423 aa).

At Lys-266 the chain carries N6-(pyridoxal phosphate)lysine.

Belongs to the class-III pyridoxal-phosphate-dependent aminotransferase family. HemL subfamily. As to quaternary structure, homodimer. Pyridoxal 5'-phosphate is required as a cofactor.

The protein resides in the cytoplasm. The catalysed reaction is (S)-4-amino-5-oxopentanoate = 5-aminolevulinate. It functions in the pathway porphyrin-containing compound metabolism; protoporphyrin-IX biosynthesis; 5-aminolevulinate from L-glutamyl-tRNA(Glu): step 2/2. The protein is Glutamate-1-semialdehyde 2,1-aminomutase of Desulfovibrio desulfuricans (strain ATCC 27774 / DSM 6949 / MB).